A 290-amino-acid chain; its full sequence is Inositol monophosphatase 2 (290 aa).

Mg(2+)-binding residues include E83, D103, I105, and D106. Residue E83 coordinates substrate. Residues 105–108 (IDGT), 207–209 (GSS), Q226, and D233 contribute to the substrate site. D233 serves as a coordination point for Mg(2+).

Belongs to the inositol monophosphatase superfamily. Homodimer. Mg(2+) is required as a cofactor. As to expression, mostly expressed in brain, small intestine, heart, kidney, and spleen (at protein level).

The protein localises to the cytoplasm. It carries out the reaction a myo-inositol phosphate + H2O = myo-inositol + phosphate. The enzyme catalyses 1D-myo-inositol 1-phosphate + H2O = myo-inositol + phosphate. The catalysed reaction is 1D-myo-inositol 2-phosphate + H2O = myo-inositol + phosphate. It catalyses the reaction 1D-myo-inositol 3-phosphate + H2O = myo-inositol + phosphate. It carries out the reaction 1D-myo-inositol 4-phosphate + H2O = myo-inositol + phosphate. The enzyme catalyses 1D-myo-inositol 5-phosphate + H2O = myo-inositol + phosphate. The catalysed reaction is 1D-myo-inositol 6-phosphate + H2O = myo-inositol + phosphate. It catalyses the reaction alpha-D-glucose 1-phosphate + H2O = D-glucose + phosphate. It carries out the reaction glycerol 2-phosphate + H2O = glycerol + phosphate. The enzyme catalyses adenosine 2'-phosphate + H2O = adenosine + phosphate. It participates in polyol metabolism; myo-inositol biosynthesis; myo-inositol from D-glucose 6-phosphate: step 2/2. Functionally, phosphatase that can use myo-inositol monophosphates, myo-inositol 1,4-diphosphate, scyllo-inositol-1,4-diphosphate, glucose-1-phosphate, beta-glycerophosphate and 2'-AMP as substrates in vitro. No physiological substrates has been described yet. Has been implicated as the pharmacological target for lithium Li(+) action in brain. This chain is Inositol monophosphatase 2, found in Mus musculus (Mouse).